The chain runs to 234 residues: uncharacterized protein (234 aa).

Transmembrane regions (helical) follow at residues 22 to 42 (TFLNTLIYCILLVIYEYIPLI), 59 to 79 (INWALSFGILPCAFAIFAYLI), 154 to 174 (FWIFFEFSIIALISFLIIFFC), and 186 to 206 (LLSLFFFVILSFSVSGIIFAL).

The protein resides in the cell membrane. This is an uncharacterized protein from Escherichia coli (strain K12).